Reading from the N-terminus, the 192-residue chain is Threonylcarbamoyl-AMP synthase (192 aa).

One can recognise a YrdC-like domain in the interval Thr5–Asp192.

It belongs to the SUA5 family. TsaC subfamily.

Its subcellular location is the cytoplasm. It carries out the reaction L-threonine + hydrogencarbonate + ATP = L-threonylcarbamoyladenylate + diphosphate + H2O. Its function is as follows. Required for the formation of a threonylcarbamoyl group on adenosine at position 37 (t(6)A37) in tRNAs that read codons beginning with adenine. Catalyzes the conversion of L-threonine, HCO(3)(-)/CO(2) and ATP to give threonylcarbamoyl-AMP (TC-AMP) as the acyladenylate intermediate, with the release of diphosphate. The protein is Threonylcarbamoyl-AMP synthase of Acinetobacter baylyi (strain ATCC 33305 / BD413 / ADP1).